Reading from the N-terminus, the 145-residue chain is Lysozyme-like protein 4 (145 aa).

A signal peptide spans 1-19; the sequence is MQLYLVLLLISYLLTPIGA. In terms of domain architecture, C-type lysozyme spans 20–145; it reads SILGRCTVAK…LDRWLDGCDL (126 aa). 4 cysteine pairs are disulfide-bonded: Cys25–Cys143, Cys49–Cys130, Cys84–Cys95, and Cys91–Cys109. Glu54 is an active-site residue.

The protein belongs to the glycosyl hydrolase 22 family. As to quaternary structure, monomer. Expressed strongly in testis and in epididymis, and weakly in brain and lung. Detected in sperm (at protein level).

Its subcellular location is the secreted. The protein localises to the cytoplasmic vesicle. It is found in the secretory vesicle. It localises to the acrosome. The protein resides in the cell projection. Its subcellular location is the cilium. The protein localises to the flagellum. Its function is as follows. May be involved in fertilization. Has no detectable bacteriolytic in vitro. Has no lysozyme activity in vitro. The protein is Lysozyme-like protein 4 (Lyzl4) of Mus musculus (Mouse).